A 532-amino-acid chain; its full sequence is Phosphoenolpyruvate carboxykinase (ATP) (532 aa).

3 residues coordinate substrate: R60, Y194, and K200. Residues K200, H219, and 237–245 (GLSGTGKTT) contribute to the ATP site. Mn(2+) is bound by residues K200 and H219. Mn(2+) is bound at residue D258. ATP is bound by residues E286, R324, and T449. Substrate is bound at residue R324.

The protein belongs to the phosphoenolpyruvate carboxykinase (ATP) family. The cofactor is Mn(2+).

It is found in the cytoplasm. The enzyme catalyses oxaloacetate + ATP = phosphoenolpyruvate + ADP + CO2. It functions in the pathway carbohydrate biosynthesis; gluconeogenesis. Functionally, involved in the gluconeogenesis. Catalyzes the conversion of oxaloacetate (OAA) to phosphoenolpyruvate (PEP) through direct phosphoryl transfer between the nucleoside triphosphate and OAA. This is Phosphoenolpyruvate carboxykinase (ATP) from Ruegeria sp. (strain TM1040) (Silicibacter sp.).